The following is a 341-amino-acid chain: Phosphoribosylaminoimidazole-succinocarboxamide synthase, chloroplastic (341 aa).

The protein belongs to the SAICAR synthetase family.

It localises to the plastid. It is found in the chloroplast. It carries out the reaction 5-amino-1-(5-phospho-D-ribosyl)imidazole-4-carboxylate + L-aspartate + ATP = (2S)-2-[5-amino-1-(5-phospho-beta-D-ribosyl)imidazole-4-carboxamido]succinate + ADP + phosphate + 2 H(+). The protein operates within purine metabolism; IMP biosynthesis via de novo pathway; 5-amino-1-(5-phospho-D-ribosyl)imidazole-4-carboxamide from 5-amino-1-(5-phospho-D-ribosyl)imidazole-4-carboxylate: step 1/2. The protein is Phosphoribosylaminoimidazole-succinocarboxamide synthase, chloroplastic (PUR7) of Vigna aconitifolia (Moth bean).